A 955-amino-acid polypeptide reads, in one-letter code: GPI inositol-deacylase B (955 aa).

An N-linked (GlcNAc...) asparagine glycan is attached at Asn-7. Residues 8-28 (ASVALWTVFTILTIWISFALH) form a helical membrane-spanning segment. Ser-180 is an active-site residue. Asn-431 carries an N-linked (GlcNAc...) asparagine glycan. Transmembrane regions (helical) follow at residues 489-509 (IAFPALTSGLISYKVLTSGGV), 600-620 (LLFSLPTAVLYAVLLLQFWRY), 643-663 (YLSWACLVVAGLSFVIKFEFI), and 703-723 (PIGVVLAPAFLALATGIVVVV). Asn-753 carries N-linked (GlcNAc...) asparagine glycosylation. 3 consecutive transmembrane segments (helical) span residues 772 to 792 (VIIALMALLVLLFVPYQLAFA), 840 to 860 (TMSVVMVWTTLVNIPVLAVWV), and 870 to 890 (IFSSHHNLLSVLPTLLFIENL). A glycan (N-linked (GlcNAc...) asparagine) is linked at Asn-914. Residues 919-939 (GMMHAFMIHHWFNLLAGWLLI) traverse the membrane as a helical segment. N-linked (GlcNAc...) asparagine glycosylation occurs at Asn-945.

The protein belongs to the GPI inositol-deacylase family.

The protein localises to the endoplasmic reticulum membrane. Involved in inositol deacylation of GPI-anchored proteins which plays important roles in the quality control and ER-associated degradation of GPI-anchored proteins. This chain is GPI inositol-deacylase B (BST1B), found in Yarrowia lipolytica (strain CLIB 122 / E 150) (Yeast).